An 82-amino-acid chain; its full sequence is Small ribosomal subunit protein bS18 (82 aa).

The tract at residues 1-20 (MSETSSAPVRRPFHRRRKTC) is disordered.

The protein belongs to the bacterial ribosomal protein bS18 family. In terms of assembly, part of the 30S ribosomal subunit. Forms a tight heterodimer with protein bS6.

Functionally, binds as a heterodimer with protein bS6 to the central domain of the 16S rRNA, where it helps stabilize the platform of the 30S subunit. The protein is Small ribosomal subunit protein bS18 of Rhizobium johnstonii (strain DSM 114642 / LMG 32736 / 3841) (Rhizobium leguminosarum bv. viciae).